The chain runs to 124 residues: Phosphoribosyl-ATP pyrophosphatase (124 aa).

Belongs to the PRA-PH family.

The protein localises to the cytoplasm. The enzyme catalyses 1-(5-phospho-beta-D-ribosyl)-ATP + H2O = 1-(5-phospho-beta-D-ribosyl)-5'-AMP + diphosphate + H(+). Its pathway is amino-acid biosynthesis; L-histidine biosynthesis; L-histidine from 5-phospho-alpha-D-ribose 1-diphosphate: step 2/9. The sequence is that of Phosphoribosyl-ATP pyrophosphatase (hisE) from Ralstonia nicotianae (strain ATCC BAA-1114 / GMI1000) (Ralstonia solanacearum).